The chain runs to 232 residues: tRNA (guanine-N(1)-)-methyltransferase (232 aa).

S-adenosyl-L-methionine contacts are provided by residues G108 and 128-133 (IGDFIM).

The protein belongs to the RNA methyltransferase TrmD family. As to quaternary structure, homodimer.

It localises to the cytoplasm. The enzyme catalyses guanosine(37) in tRNA + S-adenosyl-L-methionine = N(1)-methylguanosine(37) in tRNA + S-adenosyl-L-homocysteine + H(+). Its function is as follows. Specifically methylates guanosine-37 in various tRNAs. In Campylobacter fetus subsp. fetus (strain 82-40), this protein is tRNA (guanine-N(1)-)-methyltransferase.